The chain runs to 417 residues: Serine hydroxymethyltransferase (417 aa).

Residues Leu121 and 125-127 each bind (6S)-5,6,7,8-tetrahydrofolate; that span reads GHL. An N6-(pyridoxal phosphate)lysine modification is found at Lys229. 355-357 lines the (6S)-5,6,7,8-tetrahydrofolate pocket; the sequence is SPF.

The protein belongs to the SHMT family. Homodimer. Pyridoxal 5'-phosphate is required as a cofactor.

The protein resides in the cytoplasm. The enzyme catalyses (6R)-5,10-methylene-5,6,7,8-tetrahydrofolate + glycine + H2O = (6S)-5,6,7,8-tetrahydrofolate + L-serine. The protein operates within one-carbon metabolism; tetrahydrofolate interconversion. It participates in amino-acid biosynthesis; glycine biosynthesis; glycine from L-serine: step 1/1. Functionally, catalyzes the reversible interconversion of serine and glycine with tetrahydrofolate (THF) serving as the one-carbon carrier. This reaction serves as the major source of one-carbon groups required for the biosynthesis of purines, thymidylate, methionine, and other important biomolecules. Also exhibits THF-independent aldolase activity toward beta-hydroxyamino acids, producing glycine and aldehydes, via a retro-aldol mechanism. This is Serine hydroxymethyltransferase from Sodalis glossinidius (strain morsitans).